The following is a 247-amino-acid chain: Cell division protein ZapD (247 aa).

This sequence belongs to the ZapD family. In terms of assembly, interacts with FtsZ.

It localises to the cytoplasm. Its function is as follows. Cell division factor that enhances FtsZ-ring assembly. Directly interacts with FtsZ and promotes bundling of FtsZ protofilaments, with a reduction in FtsZ GTPase activity. The protein is Cell division protein ZapD of Shigella boydii serotype 4 (strain Sb227).